The chain runs to 371 residues: Putative glutamate--cysteine ligase 2 (371 aa).

It belongs to the glutamate--cysteine ligase type 2 family. YbdK subfamily.

It catalyses the reaction L-cysteine + L-glutamate + ATP = gamma-L-glutamyl-L-cysteine + ADP + phosphate + H(+). ATP-dependent carboxylate-amine ligase which exhibits weak glutamate--cysteine ligase activity. This Paraburkholderia phytofirmans (strain DSM 17436 / LMG 22146 / PsJN) (Burkholderia phytofirmans) protein is Putative glutamate--cysteine ligase 2.